Consider the following 260-residue polypeptide: Snake venom serine proteinase 12 (260 aa).

An N-terminal signal peptide occupies residues 1 to 18; it reads MVLIRVLANLLILQLSYA. The propeptide occupies 19 to 24; it reads QKSSEL. Residues 25–251 enclose the Peptidase S1 domain; sequence VIGGDECNIN…HLDWIQSIIA (227 aa). 6 disulfides stabilise this stretch: Cys-31-Cys-163, Cys-50-Cys-66, Cys-98-Cys-258, Cys-142-Cys-212, Cys-174-Cys-191, and Cys-202-Cys-227. The active-site Charge relay system is His-65. N-linked (GlcNAc...) asparagine glycosylation is present at Asn-103. Asp-110 serves as the catalytic Charge relay system. Residue Ser-206 is the Charge relay system of the active site.

Belongs to the peptidase S1 family. Snake venom subfamily. In terms of assembly, monomer. As to expression, expressed by the venom gland.

Its subcellular location is the secreted. Its function is as follows. Snake venom serine protease that may act in the hemostasis system of the prey. The chain is Snake venom serine proteinase 12 from Crotalus adamanteus (Eastern diamondback rattlesnake).